We begin with the raw amino-acid sequence, 921 residues long: MEYKNTLLMPKTEFPMRGNLPKREPAMQEKWAEMNIYEKVQEHTKGRPLFVLHDGPPYANGDIHMGHALNKVLKDFIVRYKSMTGFCAPYVPGWDTHGLPIEQALTNKGVKRKEMTVAEFRKLCAEYAYEQVERQREQFKRLGVRADWDNPYITLEPAYEAQQIKVFGDMAKKGYIYKGQKPVYWSPTSESALAEAEIEYQDKKSASIYVAFPVKDGKNVLEGDEKYIIWTTTPWTLPANLGISVHPELEYAIVKVNDEKYIIASELFETVAKTLEWENAEVVKTVKGSELEYTVAKHPFYDRDSLVMLGDHVTTDAGTGCVHTAPGHGEDDFIVGKKYGLEVLCPVDDKGVLTEEAPGFEGLFYDKANKPITEKLEEVGALLKLTFITHSYPHDWRTKKPIIFRATAQWFASIEAFRKELLEAVAETKWVPAWGETRLHNMVRDRGDWCISRQRAWGVPIPVFYAENGDPIITDETINHVADLFREHGSNVWFEREAKDLLPEGFTHPGSPNGEFRKETDIMDVWFDSGSSHQAVLEERDDLQRPADLYLEGSDQYRGWFNSSLSTAVAVTGKAPYKGVLSHGFVLDGEGRKMSKSIGNIVVPKKIMDQLGGDILRLWVSSVDYQSDVRISDDILKQVAEVYRKIRNTFRFLLGNLDDFKPSENTVAVAELREVDRYMLVKLNDLITKVKEAYETYDFAAVYHAIHNFCTIDLSSFYLDFAKDILYIEGANHEDRRAIQTVLYDVLVALTKLVTPILPHTADEVWPYIPGVTEESVQLTDMPEAVQLDGAEALKTKWDAFMTLRDDVLKALEVARNEKVIGKSLNASITLYPTAEMKAMLESINEDLKQLFIVSEYKLGGMMEEAPADAPKYEHTAVVVAQATGETCERCWVVSETIGKDAEHETLCERCATVVKENYVK.

Residues 57-67 (PYANGDIHMGH) carry the 'HIGH' region motif. Residue Glu552 coordinates L-isoleucyl-5'-AMP. The 'KMSKS' region motif lies at 593–597 (KMSKS). Lys596 is a binding site for ATP. Positions 888, 891, 908, and 911 each coordinate Zn(2+).

The protein belongs to the class-I aminoacyl-tRNA synthetase family. IleS type 1 subfamily. In terms of assembly, monomer. Requires Zn(2+) as cofactor.

Its subcellular location is the cytoplasm. The catalysed reaction is tRNA(Ile) + L-isoleucine + ATP = L-isoleucyl-tRNA(Ile) + AMP + diphosphate. Functionally, catalyzes the attachment of isoleucine to tRNA(Ile). As IleRS can inadvertently accommodate and process structurally similar amino acids such as valine, to avoid such errors it has two additional distinct tRNA(Ile)-dependent editing activities. One activity is designated as 'pretransfer' editing and involves the hydrolysis of activated Val-AMP. The other activity is designated 'posttransfer' editing and involves deacylation of mischarged Val-tRNA(Ile). The sequence is that of Isoleucine--tRNA ligase 1 from Bacillus cereus (strain ATCC 10987 / NRS 248).